Reading from the N-terminus, the 982-residue chain is Bifunctional glutamine synthetase adenylyltransferase/adenylyl-removing enzyme (982 aa).

Residues 1-460 (MSLPSLANLP…HFRQVIADPD (460 aa)) are adenylyl removase. Residues 473–982 (GAEWIPLWEE…IRIWRELRLG (510 aa)) form an adenylyl transferase region.

The protein belongs to the GlnE family. Requires Mg(2+) as cofactor.

The enzyme catalyses [glutamine synthetase]-O(4)-(5'-adenylyl)-L-tyrosine + phosphate = [glutamine synthetase]-L-tyrosine + ADP. It catalyses the reaction [glutamine synthetase]-L-tyrosine + ATP = [glutamine synthetase]-O(4)-(5'-adenylyl)-L-tyrosine + diphosphate. Functionally, involved in the regulation of glutamine synthetase GlnA, a key enzyme in the process to assimilate ammonia. When cellular nitrogen levels are high, the C-terminal adenylyl transferase (AT) inactivates GlnA by covalent transfer of an adenylyl group from ATP to specific tyrosine residue of GlnA, thus reducing its activity. Conversely, when nitrogen levels are low, the N-terminal adenylyl removase (AR) activates GlnA by removing the adenylyl group by phosphorolysis, increasing its activity. The regulatory region of GlnE binds the signal transduction protein PII (GlnB) which indicates the nitrogen status of the cell. This is Bifunctional glutamine synthetase adenylyltransferase/adenylyl-removing enzyme from Pseudomonas aeruginosa (strain ATCC 15692 / DSM 22644 / CIP 104116 / JCM 14847 / LMG 12228 / 1C / PRS 101 / PAO1).